An 877-amino-acid chain; its full sequence is MADDGMLMNFEIGEVPIVTKQSFKGGRWKDRLAAKKTAQHRVSRSTSKPSTREIFSERQHDTGAEEYIGREPSLRAPKRQRVDDNYDSYGGRNESTAAYASGKLPSGSINLGRGRKTTFQEETRPAFVAGKLPPGSINISGKKATPIQEETRPAFVSGKLPPGSINSGARKAISFQEEKKPAYISGKLPHGSIDGMRNREMAAVHREIAEGGRKPGQVVSSLFTFNPTSKKKFDEPEEESEPAKPSNAPLTEEMATFTNLGLSRRLAAHLSTKLDMKAPTAIQKASVTQLISDDSDAFIQAETGSGKTLAYLLPIVERILALSDNGIQIHRDSGLFAIILSPTRELCKQIAAVLEKVLRCAPWIVGTTVNGGESKQSEKARLRKGVNILVATPGRLADHLDNTEVLNVATVRWLVLDEGDRLMELGFEEEIKGIVEKIGRRSVASGSSEMMSLPKRRVTILCSATMKMNVQRLGEISLKDAVHIQADPSEQEKQDKANGIEADDKAFSAPTQLKQSYAIVPAKLRLVTLTALLKRAFARKGSVMKAIVFMSCADSVDFHFSLFSRSAEKSAEASEEGKVDPPTLPKSELIKETITHGATISNNSNPVILHKLHGSLAQNIRTATLKAYSESADPCVLICTDVASRGLDLPNVDFVIEYDPPFSAEDHLHRVGRTARAGREGRALIFLMPGTEEEYVSILASGYREGRKALTHHTAEDLIQKGFGGTGREWEERATNFQLEVERWSLDSPRYLEMARRGFQSHIRAYATHVANERHIFNMQELHLGHLAKAFALRDKPGSIKVPGLRPAKMTKADRSVAARKAKRGEKEEEKAPEGERVRKQRKMELDLPTVDSNEVAARMKRKMKEHMSAASEFNIG.

Disordered regions lie at residues 34 to 163 (AKKT…LPPG) and 225 to 251 (FNPT…APLT). Basic and acidic residues predominate over residues 50–73 (STREIFSERQHDTGAEEYIGREPS). Residues 255-284 (ATFTNLGLSRRLAAHLSTKLDMKAPTAIQK) carry the Q motif motif. Positions 288–484 (TQLISDDSDA…EISLKDAVHI (197 aa)) constitute a Helicase ATP-binding domain. Residue 301-308 (AETGSGKT) coordinates ATP. The DEAD box signature appears at 417–420 (DEGD). The region spanning 512 to 719 (QLKQSYAIVP…LTHHTAEDLI (208 aa)) is the Helicase C-terminal domain. The interval 803-851 (PGLRPAKMTKADRSVAARKAKRGEKEEEKAPEGERVRKQRKMELDLPTV) is disordered. The span at 825–846 (GEKEEEKAPEGERVRKQRKMEL) shows a compositional bias: basic and acidic residues.

Belongs to the DEAD box helicase family. DDX31/DBP7 subfamily.

The protein localises to the nucleus. Its subcellular location is the nucleolus. It catalyses the reaction ATP + H2O = ADP + phosphate + H(+). Functionally, ATP-binding RNA helicase involved in the biogenesis of 60S ribosomal subunits and is required for the normal formation of 25S and 5.8S rRNAs. The sequence is that of ATP-dependent RNA helicase dbp7 (dbp7) from Sclerotinia sclerotiorum (strain ATCC 18683 / 1980 / Ss-1) (White mold).